Consider the following 548-residue polypeptide: Poly(ADP-ribose) glycohydrolase 1 (548 aa).

The protein belongs to the poly(ADP-ribose) glycohydrolase family.

The catalysed reaction is [(1''-&gt;2')-ADP-alpha-D-ribose](n) + H2O = [(1''-&gt;2')-ADP-alpha-D-ribose](n-1) + ADP-D-ribose. Poly(ADP-ribose) synthesized after DNA damage is only present transiently and is rapidly degraded by poly(ADP-ribose) glycohydrolase. Involved in establishing period length of the circadian oscillator. May regulate post-translational poly(ADP-ribosyl)ation of an oscillator component. The protein is Poly(ADP-ribose) glycohydrolase 1 (PARG1) of Arabidopsis thaliana (Mouse-ear cress).